The sequence spans 408 residues: tRNA-specific 2-thiouridylase MnmA (408 aa).

ATP-binding positions include glycine 38–serine 45 and methionine 64. The segment at asparagine 124–aspartate 126 is interaction with target base in tRNA. The Nucleophile role is filled by cysteine 129. The cysteines at positions 129 and 231 are disulfide-linked. ATP is bound at residue glycine 153. An interaction with tRNA region spans residues lysine 181 to glutamine 183. Residue cysteine 231 is the Cysteine persulfide intermediate of the active site. Residues arginine 348–tyrosine 349 form an interaction with tRNA region.

It belongs to the MnmA/TRMU family.

Its subcellular location is the cytoplasm. It carries out the reaction S-sulfanyl-L-cysteinyl-[protein] + uridine(34) in tRNA + AH2 + ATP = 2-thiouridine(34) in tRNA + L-cysteinyl-[protein] + A + AMP + diphosphate + H(+). Functionally, catalyzes the 2-thiolation of uridine at the wobble position (U34) of tRNA, leading to the formation of s(2)U34. The sequence is that of tRNA-specific 2-thiouridylase MnmA from Psychrobacter cryohalolentis (strain ATCC BAA-1226 / DSM 17306 / VKM B-2378 / K5).